The chain runs to 148 residues: Lysozyme C (148 aa).

The first 18 residues, 1–18 (MKALTILGLVLLSVTVQG), serve as a signal peptide directing secretion. A C-type lysozyme domain is found at 19–148 (KIFERCELAR…VSQYVKGCGV (130 aa)). 4 disulfide bridges follow: Cys-24/Cys-146, Cys-48/Cys-134, Cys-83/Cys-99, and Cys-95/Cys-113. Residues Glu-53 and Asp-71 contribute to the active site.

It belongs to the glycosyl hydrolase 22 family. Monomer.

The protein localises to the secreted. It catalyses the reaction Hydrolysis of (1-&gt;4)-beta-linkages between N-acetylmuramic acid and N-acetyl-D-glucosamine residues in a peptidoglycan and between N-acetyl-D-glucosamine residues in chitodextrins.. Lysozymes have primarily a bacteriolytic function; those in tissues and body fluids are associated with the monocyte-macrophage system and enhance the activity of immunoagents. Also plays a role in digestion in this species. This is Lysozyme C (LYZ) from Semnopithecus entellus (Northern plains gray langur).